We begin with the raw amino-acid sequence, 43 residues long: Potassium channel toxin gamma-KTx 4.11 (43 aa).

Cystine bridges form between Cys5-Cys23, Cys11-Cys34, Cys20-Cys39, and Cys24-Cys41.

Belongs to the ergtoxin family. Gamma-KTx 4 subfamily. In terms of tissue distribution, expressed by the venom gland.

The protein resides in the secreted. In terms of biological role, reversibly blocks Kv11/ERG potassium channels. The chain is Potassium channel toxin gamma-KTx 4.11 from Centruroides noxius (Mexican scorpion).